Here is a 130-residue protein sequence, read N- to C-terminus: S-protein homolog 22 (130 aa).

A signal peptide spans 1–21 (MKYFTIFFIFFSLCMFGHVSG).

The protein belongs to the plant self-incompatibility (S1) protein family.

Its subcellular location is the secreted. This Arabidopsis thaliana (Mouse-ear cress) protein is S-protein homolog 22.